Here is a 578-residue protein sequence, read N- to C-terminus: Arginine--tRNA ligase (578 aa).

The 'HIGH' region motif lies at 127–137 (PNLAKEMHVGH).

It belongs to the class-I aminoacyl-tRNA synthetase family. Monomer.

The protein localises to the cytoplasm. It catalyses the reaction tRNA(Arg) + L-arginine + ATP = L-arginyl-tRNA(Arg) + AMP + diphosphate. This is Arginine--tRNA ligase from Pseudomonas putida (strain ATCC 700007 / DSM 6899 / JCM 31910 / BCRC 17059 / LMG 24140 / F1).